A 485-amino-acid polypeptide reads, in one-letter code: Glycogen synthase (485 aa).

An ADP-alpha-D-glucose-binding site is contributed by Lys-15.

It belongs to the glycosyltransferase 1 family. Bacterial/plant glycogen synthase subfamily.

It carries out the reaction [(1-&gt;4)-alpha-D-glucosyl](n) + ADP-alpha-D-glucose = [(1-&gt;4)-alpha-D-glucosyl](n+1) + ADP + H(+). Its pathway is glycan biosynthesis; glycogen biosynthesis. Functionally, synthesizes alpha-1,4-glucan chains using ADP-glucose. This is Glycogen synthase from Rhodospirillum rubrum (strain ATCC 11170 / ATH 1.1.1 / DSM 467 / LMG 4362 / NCIMB 8255 / S1).